The primary structure comprises 529 residues: Cytochrome P450 monooxygenase ausG (529 aa).

Residues 31-51 traverse the membrane as a helical segment; that stretch reads LLVVCGLPGLLLLFFVTAILL. A heme-binding site is contributed by C470.

The protein belongs to the cytochrome P450 family. The cofactor is heme.

Its subcellular location is the membrane. The protein operates within secondary metabolite biosynthesis; terpenoid biosynthesis. Cytochrome P450 monooxygenase; part of the gene cluster that mediates the biosynthesis of calidodehydroaustin, a fungal meroterpenoid. The first step of the pathway is the synthesis of 3,5-dimethylorsellinic acid by the polyketide synthase ausA. 3,5-dimethylorsellinic acid is then prenylated by the polyprenyl transferase ausN. Further epoxidation by the FAD-dependent monooxygenase ausM and cyclization by the probable terpene cyclase ausL lead to the formation of protoaustinoid A. Protoaustinoid A is then oxidized to spiro-lactone preaustinoid A3 by the combined action of the FAD-binding monooxygenases ausB and ausC, and the dioxygenase ausE. Acid-catalyzed keto-rearrangement and ring contraction of the tetraketide portion of preaustinoid A3 by ausJ lead to the formation of preaustinoid A4. The aldo-keto reductase ausK, with the help of ausH, is involved in the next step by transforming preaustinoid A4 into isoaustinone which is in turn hydroxylated by the P450 monooxygenase ausI to form austinolide. The cytochrome P450 monooxygenase ausG modifies austinolide to austinol. Austinol is further acetylated to austin by the O-acetyltransferase ausP, which spontaneously changes to dehydroaustin. The cytochrome P450 monooxygenase ausR then converts dehydroaustin is into 7-dehydrodehydroaustin. The hydroxylation catalyzed by ausR permits the O-acetyltransferase ausQ to add an additional acetyl group to the molecule, leading to the formation of acetoxydehydroaustin. The short chain dehydrogenase ausT catalyzes the reduction of the double bond present between carbon atoms 1 and 2 to convert 7-dehydrodehydroaustin into 1,2-dihydro-7-hydroxydehydroaustin. AusQ catalyzes not only an acetylation reaction but also the addition of the PKS ausV diketide product to 1,2-dihydro-7-hydroxydehydroaustin, forming precalidodehydroaustin. Finally, the iron/alpha-ketoglutarate-dependent dioxygenase converts precalidodehydroaustin into calidodehydroaustin. In Aspergillus calidoustus, this protein is Cytochrome P450 monooxygenase ausG.